Reading from the N-terminus, the 154-residue chain is Transcriptional repressor NrdR (154 aa).

The segment at 3 to 34 is a zinc-finger region; that stretch reads CPFCGANDTKVIDSRLVAEGEQVRRRRECLAC. One can recognise an ATP-cone domain in the interval 49-139; sequence PRLIKQDGSR…VYRRFQDLNE (91 aa).

This sequence belongs to the NrdR family. The cofactor is Zn(2+).

Functionally, negatively regulates transcription of bacterial ribonucleotide reductase nrd genes and operons by binding to NrdR-boxes. This chain is Transcriptional repressor NrdR, found in Pseudomonas syringae pv. syringae (strain B728a).